The chain runs to 635 residues: Threonine--tRNA ligase (635 aa).

The TGS domain occupies 1–62 (MITITLPDGS…EHDAMLRIIT (62 aa)). Positions 244–535 (DHRKIGKVQD…LIEHYAGIWP (292 aa)) are catalytic. Cys335, His386, and His512 together coordinate Zn(2+).

The protein belongs to the class-II aminoacyl-tRNA synthetase family. As to quaternary structure, homodimer. Zn(2+) serves as cofactor.

It localises to the cytoplasm. It catalyses the reaction tRNA(Thr) + L-threonine + ATP = L-threonyl-tRNA(Thr) + AMP + diphosphate + H(+). In terms of biological role, catalyzes the attachment of threonine to tRNA(Thr) in a two-step reaction: L-threonine is first activated by ATP to form Thr-AMP and then transferred to the acceptor end of tRNA(Thr). Also edits incorrectly charged L-seryl-tRNA(Thr). In Xylella fastidiosa (strain 9a5c), this protein is Threonine--tRNA ligase.